A 122-amino-acid chain; its full sequence is MARIAGVDLPNKKRIEYGLTYIYGIGLYKSRQILDAAGISYDKRVYELSEDEAAAIRKEIQEHHVVEGDLRKQVAMDIKALMDLGSYRGLRHRKGLPVRGQKTKTNARTRKGRRKTVGAATK.

The segment covering G95–T116 has biased composition (basic residues). The interval G95–K122 is disordered.

The protein belongs to the universal ribosomal protein uS13 family. As to quaternary structure, part of the 30S ribosomal subunit. Forms a loose heterodimer with protein S19. Forms two bridges to the 50S subunit in the 70S ribosome.

Located at the top of the head of the 30S subunit, it contacts several helices of the 16S rRNA. In the 70S ribosome it contacts the 23S rRNA (bridge B1a) and protein L5 of the 50S subunit (bridge B1b), connecting the 2 subunits; these bridges are implicated in subunit movement. Contacts the tRNAs in the A and P-sites. This Campylobacter concisus (strain 13826) protein is Small ribosomal subunit protein uS13.